The sequence spans 179 residues: Inner membrane-spanning protein YciB (179 aa).

Helical transmembrane passes span 3 to 23 (FLYD…FGIY), 49 to 69 (NALI…LWLQ), 76 to 96 (WKPT…QWLF), 119 to 139 (LNLA…YVAY), and 149 to 169 (FKLF…TLLL).

It belongs to the YciB family.

It is found in the cell inner membrane. Plays a role in cell envelope biogenesis, maintenance of cell envelope integrity and membrane homeostasis. The sequence is that of Inner membrane-spanning protein YciB from Methylobacillus flagellatus (strain ATCC 51484 / DSM 6875 / VKM B-1610 / KT).